Consider the following 472-residue polypeptide: Probable diguanylate cyclase DgcF (472 aa).

Helical transmembrane passes span 21 to 41 (SIAIFALTTLFYFIGAELRLV), 44 to 64 (LSLFWPLNGVMAGVFARYVWL), 90 to 110 (VSLAINFSNMMFIVTVALLVV), 128 to 148 (LFNYCLIAALLCAIVGAIGSV), 167 to 187 (FSTGVLIVPCMLTLAIPGVLP), 198 to 218 (IALIVSVIASVVIGGAGSLAF), 237 to 257 (LLTFVTGAVEIVLVANSVIDI), and 273 to 293 (LGIATMAICPIMVSFSVAAIN). The 138-residue stretch at 330-467 (QHLTVMLLDI…GRNRTSTMRY (138 aa)) folds into the GGDEF domain. Mg(2+) contacts are provided by aspartate 338 and isoleucine 339. Asparagine 346, histidine 351, and aspartate 355 together coordinate substrate. Glutamate 381 is a Mg(2+) binding site.

In terms of assembly, homodimer. It depends on Mg(2+) as a cofactor.

The protein localises to the cell membrane. The catalysed reaction is 2 GTP = 3',3'-c-di-GMP + 2 diphosphate. Its pathway is purine metabolism; 3',5'-cyclic di-GMP biosynthesis. In terms of biological role, catalyzes the synthesis of cyclic-di-GMP (c-di-GMP) via the condensation of 2 GTP molecules. This is Probable diguanylate cyclase DgcF from Escherichia coli O157:H7.